The following is a 771-amino-acid chain: MDLKESVTSSKEVPSSVLGSERRNVIDFYKTVRGGATVKVSASSPSLAAAAQSDSKQRRLLVDFPKGSGSNAQQPDLSKAVSLSMGLYMGETETKVMGNDLGFPQQGQISLPSGETDFRLLEESIANLSRSTSVPENPKNSASAVSGTPTEEFPKTQSDLSSEQENLKSQAGTNGGNVKFPPDQSTFDILKDLEFSSGSPGKERSESPWRPDLLMDESCLLSPLAGEDDPFLLEGNSNEDCKPLILPDTKPKIKDNGDGILSSSNSVPQPQVKIGKEDFIELCTPGVIKQEKLGPVYCQASFSGANIIGNKMSAISVHGVSTSGGQMYHYDMNTASLSQQQDQKPIFNVIPPIPVGSENWNRCQGSGEDNLTSLGTVNFPGRSVFSNGYSSPGLRPDVSSPPSSSSTTTGPPPKLCLVCSDELSGCHYGVLTCGSCKVFFKRAVEGQHNYLCAGRNDCIIDKIRRENCPACRYRKCLQAGMNLQARKTKKKIKGIQQATTGVSQNTSENPNKTIVPATLPQLTPTLVSLLEVIEPEVIHSGYDSTSPDSTWRIMTTLNMLGGRQVIAAVKWAKAIPGFKNLHLDDQMTLLQYSWMFLMAFALGWRSYKQSNGSLLCFAPDLIINEQRMSLPWMYDQCRYMLYVSSELKRLQVSYEEYLCMKTLLLLSSVPKEGLKSQELFDEIRMTYIKELGKAIVKREGNSSQNWQRFYQLTKLLDSLHEIVGNLLNICFKTFLDKTMNIEFPEMLAEIITNQLPKYSNGDIKKLLFHQK.

The modulating stretch occupies residues 1–415; the sequence is MDLKESVTSS…STTTGPPPKL (415 aa). Position 8 is a phosphothreonine (T8). At R22 the chain carries Omega-N-methylarginine. Residues S44, S133, S199, S207, and S222 each carry the phosphoserine modification. Polar residues predominate over residues 129 to 172; the sequence is SRSTSVPENPKNSASAVSGTPTEEFPKTQSDLSSEQENLKSQAG. The tract at residues 129–184 is disordered; sequence SRSTSVPENPKNSASAVSGTPTEEFPKTQSDLSSEQENLKSQAGTNGGNVKFPPDQ. A Glycyl lysine isopeptide (Lys-Gly) (interchain with G-Cter in SUMO2) cross-link involves residue K254. At S263 the chain carries Phosphoserine. Glycyl lysine isopeptide (Lys-Gly) (interchain with G-Cter in SUMO); alternate cross-links involve residues K273 and K289. Glycyl lysine isopeptide (Lys-Gly) (interchain with G-Cter in SUMO2); alternate cross-links involve residues K273 and K289. Phosphoserine occurs at positions 303 and 400. Residues 390-411 are disordered; the sequence is SSPGLRPDVSSPPSSSSTTTGP. Positions 400–409 are enriched in low complexity; it reads SPPSSSSTTT. Residue K414 forms a Glycyl lysine isopeptide (Lys-Gly) (interchain with G-Cter in ubiquitin) linkage. 2 consecutive NR C4-type zinc fingers follow at residues 416–436 and 452–476; these read CLVC…CGSC and CAGR…YRKC. A DNA-binding region (nuclear receptor) is located at residues 416 to 481; sequence CLVCSDELSG…RYRKCLQAGM (66 aa). K475, K487, K489, and K490 each carry N6-acetyllysine. An interaction with CLOCK region spans residues 480–771; it reads GMNLQARKTK…DIKKLLFHQK (292 aa). The tract at residues 482 to 517 is hinge; it reads NLQARKTKKKIKGIQQATTGVSQNTSENPNKTIVPA. In terms of domain architecture, NR LBD spans 518–752; sequence TLPQLTPTLV…FPEMLAEIIT (235 aa). The interval 526–691 is interaction with CRY1; the sequence is LVSLLEVIEP…EIRMTYIKEL (166 aa). A Glycyl lysine isopeptide (Lys-Gly) (interchain with G-Cter in SUMO) cross-link involves residue K697.

Belongs to the nuclear hormone receptor family. NR3 subfamily. In terms of assembly, heteromultimeric cytoplasmic complex with HSP90AA1, HSPA1A/HSPA1B, and FKBP5 or another immunophilin such as PPID, STIP1, or the immunophilin homolog PPP5C. Upon ligand binding FKBP5 dissociates from the complex and FKBP4 takes its place, thereby linking the complex to dynein and mediating transport to the nucleus, where the complex dissociates. Probably forms a complex composed of chaperones HSP90 and HSP70, co-chaperones CDC37, PPP5C, TSC1 and client protein TSC2, CDK4, AKT, RAF1 and NR3C1; this complex does not contain co-chaperones STIP1/HOP and PTGES3/p23. Directly interacts with UNC45A. Binds to DNA as a homodimer, and as heterodimer with NR3C2 or the retinoid X receptor. Binds STAT5A and STAT5B homodimers and heterodimers. Interacts with NRIP1, POU2F1, POU2F2 and TRIM28. Interacts with several coactivator complexes, including the SMARCA4 complex, CREBBP/EP300, TADA2L (Ada complex) and p160 coactivators such as NCOA2 and NCOA6. Interaction with BAG1 inhibits transactivation. Interacts with HEXIM1 and TGFB1I1. Interacts with NCOA1. Interacts with NCOA3, SMARCA4, SMARCC1, SMARCD1, and SMARCE1. Interacts with CLOCK, CRY1 and CRY2 in a ligand-dependent fashion. Interacts with CIART. Interacts with RWDD3. Interacts with UBE2I/UBC9 and this interaction is enhanced in the presence of RWDD3. Interacts with GRIP1. Interacts with NR4A3 (via nuclear receptor DNA-binding domain), represses transcription activity of NR4A3 on the POMC promoter Nur response element (NurRE). Directly interacts with PNRC2 to attract and form a complex with UPF1 and DCP1A; the interaction leads to rapid mRNA degradation. Interacts with GSK3B. Interacts with FNIP1 and FNIP2. Interacts (via C-terminus) with HNRNPU (via C-terminus). Interacts with MCM3AP. Interacts (via domain NR LBD) with HSP90AA1 and HSP90AB1. In the absence of hormonal ligand, interacts with TACC1. Interacts (via NR LBD domain) with ZNF764 (via KRAB domain); the interaction regulates transcription factor activity of NR3C1 by directing its actions toward certain biologic pathways. Post-translationally, acetylation by CLOCK reduces its binding to glucocorticoid response elements and its transcriptional activity. Increased proteasome-mediated degradation in response to glucocorticoids. In terms of processing, phosphorylated in the absence of hormone; becomes hyperphosphorylated in the presence of glucocorticoid. The Ser-199, Ser-222 and Ser-400-phosphorylated forms are mainly cytoplasmic, and the Ser-207-phosphorylated form is nuclear. Phosphorylation at Ser-207 increases transcriptional activity. Phosphorylation at Ser-199, Ser-222 and Ser-400 decreases signaling capacity. Phosphorylation at Ser-400 may protect from glucocorticoid-induced apoptosis. Phosphorylation at Ser-199 and Ser-207 is not required in regulation of chromosome segregation. May be dephosphorylated by PPP5C, attenuates NR3C1 action. Post-translationally, ubiquitinated by UBR5, leading to its degradation: UBR5 specifically recognizes and binds ligand-bound NR3C1 when it is not associated with coactivators (NCOAs). In presence of NCOAs, the UBR5-degron is not accessible, preventing its ubiquitination and degradation. Sumoylation at Lys-273 and Lys-289 negatively regulates its transcriptional activity. Sumoylation at Lys-697 positively regulates its transcriptional activity in the presence of RWDD3. Sumoylation at Lys-273 and Lys-289 is dispensable whereas sumoylation at Lys-697 is critical for the stimulatory effect of RWDD3 on its transcriptional activity. Heat shock increases sumoylation in a RWDD3-dependent manner.

The protein localises to the cytoplasm. The protein resides in the nucleus. It localises to the mitochondrion. Its subcellular location is the cytoskeleton. It is found in the spindle. The protein localises to the microtubule organizing center. The protein resides in the centrosome. It localises to the chromosome. Its subcellular location is the nucleoplasm. Functionally, receptor for glucocorticoids (GC). Has a dual mode of action: as a transcription factor that binds to glucocorticoid response elements (GRE), both for nuclear and mitochondrial DNA, and as a modulator of other transcription factors. Affects inflammatory responses, cellular proliferation and differentiation in target tissues. Involved in chromatin remodeling. Plays a role in rapid mRNA degradation by binding to the 5' UTR of target mRNAs and interacting with PNRC2 in a ligand-dependent manner which recruits the RNA helicase UPF1 and the mRNA-decapping enzyme DCP1A, leading to RNA decay. Could act as a coactivator for STAT5-dependent transcription upon growth hormone (GH) stimulation and could reveal an essential role of hepatic GR in the control of body growth. Mediates glucocorticoid-induced apoptosis. Promotes accurate chromosome segregation during mitosis. May act as a tumor suppressor. May play a negative role in adipogenesis through the regulation of lipolytic and antilipogenic gene expression. In Cavia porcellus (Guinea pig), this protein is Glucocorticoid receptor (NR3C1).